Here is a 357-residue protein sequence, read N- to C-terminus: Phosphoserine aminotransferase (357 aa).

R41 provides a ligand contact to L-glutamate. Residues 76-77 (GT), W102, T152, D171, and Q194 each bind pyridoxal 5'-phosphate. The residue at position 195 (K195) is an N6-(pyridoxal phosphate)lysine. 235 to 236 (NT) contacts pyridoxal 5'-phosphate.

The protein belongs to the class-V pyridoxal-phosphate-dependent aminotransferase family. SerC subfamily. In terms of assembly, homodimer. Pyridoxal 5'-phosphate serves as cofactor.

It is found in the cytoplasm. The catalysed reaction is O-phospho-L-serine + 2-oxoglutarate = 3-phosphooxypyruvate + L-glutamate. It catalyses the reaction 4-(phosphooxy)-L-threonine + 2-oxoglutarate = (R)-3-hydroxy-2-oxo-4-phosphooxybutanoate + L-glutamate. Its pathway is amino-acid biosynthesis; L-serine biosynthesis; L-serine from 3-phospho-D-glycerate: step 2/3. Its function is as follows. Catalyzes the reversible conversion of 3-phosphohydroxypyruvate to phosphoserine and of 3-hydroxy-2-oxo-4-phosphonooxybutanoate to phosphohydroxythreonine. The protein is Phosphoserine aminotransferase of Limosilactobacillus fermentum (strain NBRC 3956 / LMG 18251) (Lactobacillus fermentum).